The primary structure comprises 515 residues: Maturase K (515 aa).

Belongs to the intron maturase 2 family. MatK subfamily.

It localises to the plastid. The protein resides in the chloroplast. Its function is as follows. Usually encoded in the trnK tRNA gene intron. Probably assists in splicing its own and other chloroplast group II introns. The sequence is that of Maturase K from Pinus yunnanensis (Yunnan pine).